A 1109-amino-acid chain; its full sequence is Receptor-like protein kinase (1109 aa).

A signal peptide spans 1–20; it reads MKVAVNTFLLFLCSTSSIYA. Residues 21-764 lie on the Extracellular side of the membrane; it reads AFALNSDGAA…GGLSTLGIAM (744 aa). N-linked (GlcNAc...) asparagine glycans are attached at residues Asn50, Asn74, and Asn114. LRR repeat units follow at residues 69 to 92, 93 to 115, 117 to 140, 141 to 162, 165 to 187, and 189 to 209; these read FVDTLNLSSYGISGEFGPEISHLK, HLKKVVLSGNGFFGSIPSQLGNC, LLEHIDLSSNSFTGNIPDTLGALQ, NLRNLSLFFNSLIGPFPESLLS, HLETVYFTGNGLNGSIPSNIGNM, and ELTTLWLDDNQFSGPVPSSLG. Residues Asn144, Asn177, and Asn186 are each glycosylated (N-linked (GlcNAc...) asparagine). Asn210 carries an N-linked (GlcNAc...) asparagine glycan. LRR repeat units lie at residues 213-236, 237-258, 261-284, 309-331, 333-355, 357-378, 381-404, 405-427, 429-451, 453-476, 477-499, 500-523, 524-546, 548-569, 572-595, 596-618, 620-642, 643-666, 667-689, and 690-710; these read TLQELYLNDNNLVGTLPVTLNNLE, NLVYLDVRNNSLVGAIPLDFVS, QIDTISLSNNQFTGGLPPGLGNCT, KLDTLYLAGNHFSGRIPPELGKC, SMIDLQLQQNQLEGEIPGELGML, QLQYLHLYTNNLSGEVPLSIWK, SLQSLQLYQNNLSGELPVDMTELK, QLVSLALYENHFTGVIPQDLGAN, SLEVLDLTRNMFTGHIPPNLCSQ, KLKRLLLGYNYLEGSVPSDLGGCS, TLERLILEENNLRGGLPDFVEKQ, NLLFFDLSGNNFTGPIPPSLGNLK, NVTAIYLSSNQLSGSIPPELGSL, KLEHLNLSHNILKGILPSELSN, KLSELDASHNLLNGSIPSTLGSLT, ELTKLSLGENSFSGGIPTSLFQS, KLLNLQLGGNLLAGDIPPVGALQ, ALRSLNLSSNKLNGQLPIDLGKLK, MLEELDVSHNNLSGTLRVLSTIQ, and SLTFINISHNLFSGPVPPSLT. Residues Asn245 and Asn282 are each glycosylated (N-linked (GlcNAc...) asparagine). N-linked (GlcNAc...) asparagine glycosylation is found at Asn367, Asn391, and Asn427. Asn510, Asn524, Asn553, and Asn584 each carry an N-linked (GlcNAc...) asparagine glycan. 3 N-linked (GlcNAc...) asparagine glycosylation sites follow: Asn648, Asn677, and Asn695. A helical membrane pass occupies residues 765–785; sequence IVLGALLFIICLFLFSAFLFL. Topologically, residues 786 to 1109 are cytoplasmic; the sequence is HCKKSVQEIA…YSSSVRNKSK (324 aa). Residues 816–1096 enclose the Protein kinase domain; the sequence is LNDKYVIGKG…DVVKQLTRWS (281 aa). Residues 822–830 and Lys845 each bind ATP; that span reads IGKGAHGTI. Residues 827–850 form an LRR 27 repeat; that stretch reads HGTIYKATLSPDKVYAVKKLVFTG. The active-site Proton acceptor is the Asp942. An LRR 28 repeat occupies 958–981; sequence ISDFGIAKLLDQSATSIPSNTVQG.

It belongs to the protein kinase superfamily. Ser/Thr protein kinase family. INRPK1 and INRPK1b are expressed in leaves, cotyledons, shoot tips and roots from induced and vegetative plants. The highest concentrations of INRPK1 are found in vegetative roots, and the lowest concentrations in vegetative cotyledons. INRPK1b is more abundant in roots than other tissues. INRPK1a is expressed in vegetative roots. INRPK1c is expressed in cotyledons.

It is found in the cell membrane. The protein resides in the secreted. The catalysed reaction is L-seryl-[protein] + ATP = O-phospho-L-seryl-[protein] + ADP + H(+). The enzyme catalyses L-threonyl-[protein] + ATP = O-phospho-L-threonyl-[protein] + ADP + H(+). Possible role in short-day photoperiod floral induction. This Ipomoea nil (Japanese morning glory) protein is Receptor-like protein kinase (INRPK1).